We begin with the raw amino-acid sequence, 207 residues long: ATP-dependent Clp protease proteolytic subunit (207 aa).

Ser-111 (nucleophile) is an active-site residue. His-136 is a catalytic residue.

The protein belongs to the peptidase S14 family. As to quaternary structure, fourteen ClpP subunits assemble into 2 heptameric rings which stack back to back to give a disk-like structure with a central cavity, resembling the structure of eukaryotic proteasomes.

Its subcellular location is the cytoplasm. It catalyses the reaction Hydrolysis of proteins to small peptides in the presence of ATP and magnesium. alpha-casein is the usual test substrate. In the absence of ATP, only oligopeptides shorter than five residues are hydrolyzed (such as succinyl-Leu-Tyr-|-NHMec, and Leu-Tyr-Leu-|-Tyr-Trp, in which cleavage of the -Tyr-|-Leu- and -Tyr-|-Trp bonds also occurs).. Cleaves peptides in various proteins in a process that requires ATP hydrolysis. Has a chymotrypsin-like activity. Plays a major role in the degradation of misfolded proteins. The sequence is that of ATP-dependent Clp protease proteolytic subunit from Yersinia enterocolitica serotype O:8 / biotype 1B (strain NCTC 13174 / 8081).